Here is a 183-residue protein sequence, read N- to C-terminus: Dual-action ribosomal maturation protein DarP (183 aa).

Belongs to the DarP family.

It is found in the cytoplasm. Member of a network of 50S ribosomal subunit biogenesis factors which assembles along the 30S-50S interface, preventing incorrect 23S rRNA structures from forming. Promotes peptidyl transferase center (PTC) maturation. The chain is Dual-action ribosomal maturation protein DarP from Shigella boydii serotype 18 (strain CDC 3083-94 / BS512).